The following is a 273-amino-acid chain: Dermonecrotic toxin LhSicTox-alphaIA1iii (273 aa).

The active site involves H5. Mg(2+)-binding residues include E25 and D27. Catalysis depends on H41, which acts as the Nucleophile. 2 disulfide bridges follow: C45–C51 and C47–C190. Position 85 (D85) interacts with Mg(2+).

Belongs to the arthropod phospholipase D family. Class II subfamily. The cofactor is Mg(2+). Expressed by the venom gland.

It is found in the secreted. It carries out the reaction an N-(acyl)-sphingosylphosphocholine = an N-(acyl)-sphingosyl-1,3-cyclic phosphate + choline. It catalyses the reaction an N-(acyl)-sphingosylphosphoethanolamine = an N-(acyl)-sphingosyl-1,3-cyclic phosphate + ethanolamine. The catalysed reaction is a 1-acyl-sn-glycero-3-phosphocholine = a 1-acyl-sn-glycero-2,3-cyclic phosphate + choline. The enzyme catalyses a 1-acyl-sn-glycero-3-phosphoethanolamine = a 1-acyl-sn-glycero-2,3-cyclic phosphate + ethanolamine. Functionally, dermonecrotic toxins cleave the phosphodiester linkage between the phosphate and headgroup of certain phospholipids (sphingolipid and lysolipid substrates), forming an alcohol (often choline) and a cyclic phosphate. This toxin acts on sphingomyelin (SM). It may also act on ceramide phosphoethanolamine (CPE), lysophosphatidylcholine (LPC) and lysophosphatidylethanolamine (LPE), but not on lysophosphatidylserine (LPS), and lysophosphatidylglycerol (LPG). It acts by transphosphatidylation, releasing exclusively cyclic phosphate products as second products. Induces dermonecrosis, hemolysis, increased vascular permeability, edema, inflammatory response, and platelet aggregation. The sequence is that of Dermonecrotic toxin LhSicTox-alphaIA1iii from Loxosceles hirsuta (Recluse spider).